The primary structure comprises 217 residues: Probable transaldolase (217 aa).

The Schiff-base intermediate with substrate role is filled by Lys-83.

The protein belongs to the transaldolase family. Type 3B subfamily.

The protein resides in the cytoplasm. It catalyses the reaction D-sedoheptulose 7-phosphate + D-glyceraldehyde 3-phosphate = D-erythrose 4-phosphate + beta-D-fructose 6-phosphate. It functions in the pathway carbohydrate degradation; pentose phosphate pathway; D-glyceraldehyde 3-phosphate and beta-D-fructose 6-phosphate from D-ribose 5-phosphate and D-xylulose 5-phosphate (non-oxidative stage): step 2/3. Its function is as follows. Transaldolase is important for the balance of metabolites in the pentose-phosphate pathway. This chain is Probable transaldolase, found in Brucella anthropi (strain ATCC 49188 / DSM 6882 / CCUG 24695 / JCM 21032 / LMG 3331 / NBRC 15819 / NCTC 12168 / Alc 37) (Ochrobactrum anthropi).